Here is a 96-residue protein sequence, read N- to C-terminus: Small ribosomal subunit protein bS6 (96 aa).

The protein belongs to the bacterial ribosomal protein bS6 family.

Its function is as follows. Binds together with bS18 to 16S ribosomal RNA. In Salinispora tropica (strain ATCC BAA-916 / DSM 44818 / JCM 13857 / NBRC 105044 / CNB-440), this protein is Small ribosomal subunit protein bS6.